The primary structure comprises 290 residues: Protease HtpX homolog (290 aa).

2 helical membrane-spanning segments follow: residues 5 to 27 and 32 to 51; these read MWLRTGVLMAILTGLLMGIGYLF and VAFIMFLFSMFFNFITYWYS. His133 serves as a coordination point for Zn(2+). The active site involves Glu134. Residue His137 participates in Zn(2+) binding. 2 helical membrane passes run 143–163 and 182–202; these read ILIGTVAAAMAGAIMQLAYWA and IIGAILVAILAPIAAMLIQAA. Glu208 is a Zn(2+) binding site.

The protein belongs to the peptidase M48B family. Zn(2+) is required as a cofactor.

It is found in the cell membrane. This Thermococcus kodakarensis (strain ATCC BAA-918 / JCM 12380 / KOD1) (Pyrococcus kodakaraensis (strain KOD1)) protein is Protease HtpX homolog.